The primary structure comprises 682 residues: DNA ligase (682 aa).

Residues 42–46 (DAAYD), 88–89 (SL), and Glu-121 each bind NAD(+). Lys-123 functions as the N6-AMP-lysine intermediate in the catalytic mechanism. NAD(+)-binding residues include Arg-144, Glu-180, Lys-291, and Lys-315. Residues Cys-409, Cys-412, Cys-427, and Cys-433 each contribute to the Zn(2+) site. Residues 601–682 (AAGGALAGKT…FRSLAGLPPG (82 aa)) enclose the BRCT domain.

Belongs to the NAD-dependent DNA ligase family. LigA subfamily. Requires Mg(2+) as cofactor. Mn(2+) is required as a cofactor.

The enzyme catalyses NAD(+) + (deoxyribonucleotide)n-3'-hydroxyl + 5'-phospho-(deoxyribonucleotide)m = (deoxyribonucleotide)n+m + AMP + beta-nicotinamide D-nucleotide.. In terms of biological role, DNA ligase that catalyzes the formation of phosphodiester linkages between 5'-phosphoryl and 3'-hydroxyl groups in double-stranded DNA using NAD as a coenzyme and as the energy source for the reaction. It is essential for DNA replication and repair of damaged DNA. This Acidiphilium cryptum (strain JF-5) protein is DNA ligase.